Reading from the N-terminus, the 134-residue chain is DNA-binding protein inhibitor ID-2 (134 aa).

Positions M1–R24 are disordered. Phosphoserine is present on residues S14 and S25. In terms of domain architecture, bHLH spans S23–L75. The Nuclear export signal motif lies at L106 to L115.

In terms of assembly, interacts with GATA4 and NKX2-5. Interacts with NR0B2. Interacts with CLOCK and BMAL1. Interacts with IFI204. Interacts with NEDD9/HEF1. Interacts with ASB4; this interaction promotes ID2 proteasomal degradation. In terms of processing, ubiquitinated in a ASB4-depedent manner, leading to proteasomal degradation. Phosphorylated in vitro by CDK1, PKA and PKC.

It localises to the cytoplasm. Its subcellular location is the nucleus. In terms of biological role, transcriptional regulator (lacking a basic DNA binding domain) which negatively regulates the basic helix-loop-helix (bHLH) transcription factors by forming heterodimers and inhibiting their DNA binding and transcriptional activity. Implicated in regulating a variety of cellular processes, including cellular growth, senescence, differentiation, apoptosis, angiogenesis, and neoplastic transformation. Inhibits skeletal muscle and cardiac myocyte differentiation. Regulates the circadian clock by repressing the transcriptional activator activity of the CLOCK-BMAL1 heterodimer. Restricts the CLOCK and BMAL1 localization to the cytoplasm. Plays a role in both the input and output pathways of the circadian clock: in the input component, is involved in modulating the magnitude of photic entrainment and in the output component, contributes to the regulation of a variety of liver clock-controlled genes involved in lipid metabolism. This Bos taurus (Bovine) protein is DNA-binding protein inhibitor ID-2 (ID2).